Reading from the N-terminus, the 106-residue chain is UPF0145 protein FTL_1249 (106 aa).

This sequence belongs to the UPF0145 family.

In Francisella tularensis subsp. holarctica (strain LVS), this protein is UPF0145 protein FTL_1249.